The following is a 460-amino-acid chain: GTPase Der (460 aa).

EngA-type G domains are found at residues 3-167 and 189-364; these read FTFA…PEPD and IRVA…ATWN. Residues 9–16, 56–60, 119–122, 195–202, 242–246, and 307–310 contribute to the GTP site; these read GRPNVGKS, DTAGL, NKSE, GRPNAGKS, and NKWD. The 85-residue stretch at 365–449 folds into the KH-like domain; the sequence is RRVPTAALNR…PVRIMLREKA (85 aa).

This sequence belongs to the TRAFAC class TrmE-Era-EngA-EngB-Septin-like GTPase superfamily. EngA (Der) GTPase family. As to quaternary structure, associates with the 50S ribosomal subunit.

In terms of biological role, GTPase that plays an essential role in the late steps of ribosome biogenesis. The sequence is that of GTPase Der from Rhodopseudomonas palustris (strain BisA53).